A 627-amino-acid chain; its full sequence is MDYSFDTTAEDPWVRISDCIKNLFSPIMTENHSHMPLQPNVSLSEGDGTQGHPDGTPPKLETANGTPKVYRPADSSTVKKGPPVAPKPAWFRQSLKGLRNRASDPRRLPDPALSVQPVPASREHPGPHTQASSIKQRISSFETFGSSQRLDKGAQRLSLQLSSGEAAKPVGKHEGGRLPGLLGRGAVPTLAPQETEQVLPSGSPAASEATDPGVSESPPPGRQPSEKTLPPSPDPLLRLLPTQTEESQGPVLKMPSQRARSFPLTRSQSCETKLLDEKTSKLYSISSQVSSAVMKSLLCLPSSISWGQAPCIPKEGASPTSLSNEDSAANGCAETSGSDTGFSLNLSELREYTEGLTEAKEADDGDHSSPQSGQSVISLLSSEELKQLIEEVKDLDEATLKQLDSIHVTILHKEEGAGLGFSLAGGADLENKVITVHRVFPNGLASQEGTIQKGNEVLSINGKSLKGTTHNDALAILRQAREPRQAVIVTRKLTPETVPDLNSSTDSAASASAASDVSVDSTAEATVCTVTLEKMSGGLGFSLEGGKGSLQGDKPLTINRIFKGAASEQSETVQPGDEILHLAGTAMQGLTRFEAWNIIKALPDGPVTIVIKRKSMQSKGTSAAGDS.

3 disordered regions span residues 34-136 (HMPL…SIKQ), 162-267 (SSGE…LTRS), and 316-337 (GASP…ETSG). Position 217 is a phosphoserine (Ser-217). Residues 318 to 337 (SPTSLSNEDSAANGCAETSG) are compositionally biased toward polar residues. The interval 401–497 (KQLDSIHVTI…IVTRKLTPET (97 aa)) is interaction with PPP1R12A, PPP1R12B and PPP1R12C. PDZ domains lie at 407-492 (HVTI…VTRK) and 529-614 (TVTL…IKRK).

Homotetramer. Pro-interleukin-16 interacts (via PDZ 2 domain) with PPP1R12A, PPP1R12B and PPP1R12C. Pro-interleukin-16 interacts with GRIN2A. Pro-interleukin-16 interacts with GABPB1. Pro-interleukin-16 interacts (via PDZ 3 domain) with HDAC3.

The protein localises to the secreted. It is found in the cytoplasm. Its subcellular location is the nucleus. Functionally, interleukin-16 stimulates a migratory response in CD4+ lymphocytes, monocytes, and eosinophils. Primes CD4+ T-cells for IL-2 and IL-15 responsiveness. Also induces T-lymphocyte expression of interleukin 2 receptor. Ligand for CD4. Its function is as follows. Pro-interleukin-16 is involved in cell cycle progression in T-cells. Appears to be involved in transcriptional regulation of SKP2 and is probably part of a transcriptional repression complex on the core promoter of the SKP2 gene. May act as a scaffold for GABPB1 (the DNA-binding subunit the GABP transcription factor complex) and HDAC3 thus maintaining transcriptional repression and blocking cell cycle progression in resting T-cells. This chain is Pro-interleukin-16 (IL16), found in Saimiri sciureus (Common squirrel monkey).